Consider the following 520-residue polypeptide: Fusaridione A cluster transcription factor fsdR (520 aa).

Residues M1–K30 form a disordered region.

The protein localises to the nucleus. Transcription factor that regulates the expression of the gene cluster that mediates the biosynthesis of fusaridione A. This is Fusaridione A cluster transcription factor fsdR from Fusarium heterosporum.